Here is a 152-residue protein sequence, read N- to C-terminus: Sec-independent protein translocase protein TatB (152 aa).

A helical transmembrane segment spans residues 1 to 21; that stretch reads MFDLGWSELLVIGVVALIVVG.

It belongs to the TatB family. In terms of assembly, the Tat system comprises two distinct complexes: a TatABC complex, containing multiple copies of TatA, TatB and TatC subunits, and a separate TatA complex, containing only TatA subunits. Substrates initially bind to the TatABC complex, which probably triggers association of the separate TatA complex to form the active translocon.

It localises to the cell inner membrane. Functionally, part of the twin-arginine translocation (Tat) system that transports large folded proteins containing a characteristic twin-arginine motif in their signal peptide across membranes. Together with TatC, TatB is part of a receptor directly interacting with Tat signal peptides. TatB may form an oligomeric binding site that transiently accommodates folded Tat precursor proteins before their translocation. This is Sec-independent protein translocase protein TatB from Ruegeria pomeroyi (strain ATCC 700808 / DSM 15171 / DSS-3) (Silicibacter pomeroyi).